The chain runs to 187 residues: Transmembrane protein 212 (187 aa).

The next 5 membrane-spanning stretches (helical) occupy residues 11 to 31, 42 to 62, 76 to 96, 106 to 126, and 148 to 168; these read TLVTLGGLSIFSGAIAFFPVF, VWIACPIWNGALAVTAGSLVL, AVFTFVILSILGCPLHFTVAL, FYSFSGVAGTNYLGYVVTFPF, and LQVLDLCLSLILFCVSLAVFI.

The protein localises to the membrane. In Mus musculus (Mouse), this protein is Transmembrane protein 212 (Tmem212).